The sequence spans 387 residues: uncharacterized protein (387 aa).

This is an uncharacterized protein from Escherichia coli (strain K12).